Consider the following 142-residue polypeptide: Large ribosomal subunit protein uL13 (142 aa).

It belongs to the universal ribosomal protein uL13 family. As to quaternary structure, part of the 50S ribosomal subunit.

Its function is as follows. This protein is one of the early assembly proteins of the 50S ribosomal subunit, although it is not seen to bind rRNA by itself. It is important during the early stages of 50S assembly. In Hahella chejuensis (strain KCTC 2396), this protein is Large ribosomal subunit protein uL13.